Here is a 784-residue protein sequence, read N- to C-terminus: Probable leucine-rich repeat receptor-like protein kinase IMK3 (784 aa).

An N-terminal signal peptide occupies residues 1-48; sequence MEFITQNQAITSLSMINTDIDQPKASLRSRFLLHLIICLLFFVPPCSS. At 49–409 the chain is on the extracellular side; it reads QAWDGVVITQ…PSHRNLSTKD (361 aa). N-linked (GlcNAc...) asparagine glycosylation is present at N82. LRR repeat units lie at residues 126-148, 150-172, 174-197, 198-220, 222-242, 247-268, 271-294, 295-317, 319-342, and 343-365; these read ALRKLSLHDNNLGGSIPMSLGLI, NLRGVQLFNNRLTGSIPASLGVS, FLQTLDLSNNLLSEIIPPNLADSS, KLLRLNLSFNSLSGQIPVSLSRS, SLQFLALDHNNLSGPILDTWG, NLRVLSLDHNSLSGPFPFSLCN, QLQDFSFSHNRIRGTLPSELSKLT, KLRKMDISGNSVSGHIPETLGNI, SLIHLDLSQNKLTGEIPISISDLE, and SLNFFNVSYNNLSGPVPTLLSQK. 3 N-linked (GlcNAc...) asparagine glycosylation sites follow: N203, N232, and N268. N-linked (GlcNAc...) asparagine glycosylation occurs at N316. N-linked (GlcNAc...) asparagine glycosylation is found at N348, N353, N367, and N404. Residues 410–430 traverse the membrane as a helical segment; sequence IILIASGALLIVMLILVCVLC. Topologically, residues 431–784 are cytoplasmic; that stretch reads CLLRKKANET…VPEASASTSQ (354 aa). The tract at residues 441 to 467 is disordered; that stretch reads KAKGGEAGPGAVAAKTEKGGEAEAGGE. The Protein kinase domain maps to 488 to 773; the sequence is CATAEIMGKS…TTATTSEPLI (286 aa). ATP-binding positions include 494-502 and K516; that span reads MGKSTYGTV. Residues 760-784 are disordered; that stretch reads RPEETTATTSEPLIDVPEASASTSQ.

It belongs to the protein kinase superfamily. Ser/Thr protein kinase family. Interacts with AGL24. Post-translationally, autophosphorylated. Expressed in meristems, including roots, vegetative, inflorescence and floral meristems, and in embryos.

Its subcellular location is the cell membrane. It catalyses the reaction L-seryl-[protein] + ATP = O-phospho-L-seryl-[protein] + ADP + H(+). The catalysed reaction is L-threonyl-[protein] + ATP = O-phospho-L-threonyl-[protein] + ADP + H(+). Its function is as follows. Can phosphorylate AGL24. This chain is Probable leucine-rich repeat receptor-like protein kinase IMK3 (IMK3), found in Arabidopsis thaliana (Mouse-ear cress).